The sequence spans 245 residues: 3-deoxy-manno-octulosonate cytidylyltransferase (245 aa).

It belongs to the KdsB family.

Its subcellular location is the cytoplasm. The catalysed reaction is 3-deoxy-alpha-D-manno-oct-2-ulosonate + CTP = CMP-3-deoxy-beta-D-manno-octulosonate + diphosphate. It functions in the pathway nucleotide-sugar biosynthesis; CMP-3-deoxy-D-manno-octulosonate biosynthesis; CMP-3-deoxy-D-manno-octulosonate from 3-deoxy-D-manno-octulosonate and CTP: step 1/1. Its pathway is bacterial outer membrane biogenesis; lipopolysaccharide biosynthesis. Activates KDO (a required 8-carbon sugar) for incorporation into bacterial lipopolysaccharide in Gram-negative bacteria. The protein is 3-deoxy-manno-octulosonate cytidylyltransferase of Rhodopseudomonas palustris (strain TIE-1).